The chain runs to 378 residues: TelA-like protein SAV1406 (378 aa).

Belongs to the TelA family.

This is TelA-like protein SAV1406 from Staphylococcus aureus (strain Mu50 / ATCC 700699).